A 502-amino-acid polypeptide reads, in one-letter code: Keratin-associated protein 16-1 (502 aa).

15 consecutive repeat copies span residues 4-8 (CCCSR), 58-62 (CCQPS), 73-77 (CCEAT), 93-97 (CCEAT), 108-112 (CCQPV), 113-117 (CCEAT), 133-137 (CCEAT), 152-156 (CCETS), 177-181 (CCQPV), 187-191 (CCSAV), 212-216 (CCQPV), 222-226 (CCPSV), 272-276 (CCVQG), 292-296 (CCVSS), and 347-351 (CCRPG). A 15 X 5 AA repeats of C-C-X(3) region spans residues 73-307 (CCEATICEPS…CQPVCPEPSP (235 aa)). The tract at residues 435–502 (RQPCTDSDND…QPAASKPADR (68 aa)) is disordered. Residues 489–502 (AAAPQPAASKPADR) show a composition bias toward low complexity.

Belongs to the KRTAP type 16 family. Interacts with hair keratins.

Functionally, in the hair cortex, hair keratin intermediate filaments are embedded in an interfilamentous matrix, consisting of hair keratin-associated proteins (KRTAP), which are essential for the formation of a rigid and resistant hair shaft through their extensive disulfide bond cross-linking with abundant cysteine residues of hair keratins. The matrix proteins include the high-sulfur and high-glycine-tyrosine keratins. The polypeptide is Keratin-associated protein 16-1 (Krtap16-1) (Mus musculus (Mouse)).